A 103-amino-acid chain; its full sequence is Co-chaperonin GroES (103 aa).

This sequence belongs to the GroES chaperonin family. Heptamer of 7 subunits arranged in a ring. Interacts with the chaperonin GroEL.

Its subcellular location is the cytoplasm. Functionally, together with the chaperonin GroEL, plays an essential role in assisting protein folding. The GroEL-GroES system forms a nano-cage that allows encapsulation of the non-native substrate proteins and provides a physical environment optimized to promote and accelerate protein folding. GroES binds to the apical surface of the GroEL ring, thereby capping the opening of the GroEL channel. This is Co-chaperonin GroES from Synechococcus sp. (strain CC9605).